We begin with the raw amino-acid sequence, 661 residues long: UvrABC system protein B (661 aa).

The Helicase ATP-binding domain maps to 25–182 (AGLSSKKRSQ…NDLINLQYER (158 aa)). 38-45 (GITGSGKT) serves as a coordination point for ATP. The short motif at 91–114 (YYDYYQPEAYIARTDTFIEKDSSI) is the Beta-hairpin element. In terms of domain architecture, Helicase C-terminal spans 430–592 (QVEDLISEIQ…IIPKTINRAI (163 aa)). Residues 621–656 (KTHIDKLKKEMLKAASNLEFEQAVKLRDQLKTLEAA) form the UVR domain.

It belongs to the UvrB family. Forms a heterotetramer with UvrA during the search for lesions. Interacts with UvrC in an incision complex.

It localises to the cytoplasm. In terms of biological role, the UvrABC repair system catalyzes the recognition and processing of DNA lesions. A damage recognition complex composed of 2 UvrA and 2 UvrB subunits scans DNA for abnormalities. Upon binding of the UvrA(2)B(2) complex to a putative damaged site, the DNA wraps around one UvrB monomer. DNA wrap is dependent on ATP binding by UvrB and probably causes local melting of the DNA helix, facilitating insertion of UvrB beta-hairpin between the DNA strands. Then UvrB probes one DNA strand for the presence of a lesion. If a lesion is found the UvrA subunits dissociate and the UvrB-DNA preincision complex is formed. This complex is subsequently bound by UvrC and the second UvrB is released. If no lesion is found, the DNA wraps around the other UvrB subunit that will check the other stand for damage. The polypeptide is UvrABC system protein B (Rickettsia peacockii (strain Rustic)).